Consider the following 610-residue polypeptide: Elongation factor 4 (610 aa).

Residues 11 to 193 form the tr-type G domain; sequence EKIRNFSIIA…QIVEKVPAPT (183 aa). GTP is bound by residues 23-28 and 140-143; these read DHGKST and NKID.

It belongs to the TRAFAC class translation factor GTPase superfamily. Classic translation factor GTPase family. LepA subfamily.

It localises to the cell membrane. It catalyses the reaction GTP + H2O = GDP + phosphate + H(+). Its function is as follows. Required for accurate and efficient protein synthesis under certain stress conditions. May act as a fidelity factor of the translation reaction, by catalyzing a one-codon backward translocation of tRNAs on improperly translocated ribosomes. Back-translocation proceeds from a post-translocation (POST) complex to a pre-translocation (PRE) complex, thus giving elongation factor G a second chance to translocate the tRNAs correctly. Binds to ribosomes in a GTP-dependent manner. This is Elongation factor 4 from Streptococcus pyogenes serotype M12 (strain MGAS9429).